Consider the following 321-residue polypeptide: Proline-rich protein 2 (321 aa).

The N-terminal stretch at 1 to 26 is a signal peptide; it reads MRILPKSGGGALCLLFVFALCSVAHS. Tandem repeats lie at residues 168-172, 173-176, 177-181, 185-189, 190-194, 198-202, 207-211, 212-217, 218-223, 225-229, 234-238, 240-244, 245-251, 252-256, 262-266, 267-271, 272-276, 277-281, 282-286, 288-292, 293-297, 298-302, 303-307, and 315-319. The interval 168–319 is 24 X 5 AA approximate repeats; it reads PPLNLPPLTF…KFGKWPPFPS (152 aa).

Belongs to the plant proline-rich protein superfamily. As to expression, mostly expressed in aerial organs, particularly in expanding leaves, stems, flowers, and siliques.

The protein localises to the secreted. It is found in the cell wall. In Arabidopsis thaliana (Mouse-ear cress), this protein is Proline-rich protein 2 (PRP2).